Here is a 463-residue protein sequence, read N- to C-terminus: Bifunctional protein HldE (463 aa).

Residues 1-313 (MTGPMAVRTD…RALAALPDTD (313 aa)) form a ribokinase region. Asp258 is an active-site residue. The segment at 331–463 (AAGGCFDLLH…LLARAAEGAR (133 aa)) is cytidylyltransferase.

In the N-terminal section; belongs to the carbohydrate kinase PfkB family. The protein in the C-terminal section; belongs to the cytidylyltransferase family. As to quaternary structure, homodimer.

It catalyses the reaction D-glycero-beta-D-manno-heptose 7-phosphate + ATP = D-glycero-beta-D-manno-heptose 1,7-bisphosphate + ADP + H(+). The enzyme catalyses D-glycero-beta-D-manno-heptose 1-phosphate + ATP + H(+) = ADP-D-glycero-beta-D-manno-heptose + diphosphate. It participates in nucleotide-sugar biosynthesis; ADP-L-glycero-beta-D-manno-heptose biosynthesis; ADP-L-glycero-beta-D-manno-heptose from D-glycero-beta-D-manno-heptose 7-phosphate: step 1/4. Its pathway is nucleotide-sugar biosynthesis; ADP-L-glycero-beta-D-manno-heptose biosynthesis; ADP-L-glycero-beta-D-manno-heptose from D-glycero-beta-D-manno-heptose 7-phosphate: step 3/4. In terms of biological role, catalyzes the phosphorylation of D-glycero-D-manno-heptose 7-phosphate at the C-1 position to selectively form D-glycero-beta-D-manno-heptose-1,7-bisphosphate. Functionally, catalyzes the ADP transfer from ATP to D-glycero-beta-D-manno-heptose 1-phosphate, yielding ADP-D-glycero-beta-D-manno-heptose. In Streptomyces coelicolor (strain ATCC BAA-471 / A3(2) / M145), this protein is Bifunctional protein HldE.